Consider the following 341-residue polypeptide: Ketol-acid reductoisomerase (NADP(+)) (341 aa).

Residues 2–182 enclose the KARI N-terminal Rossmann domain; the sequence is TDIVYDKDAD…GGLRAGGIRT (181 aa). Residues 25–28, Lys48, Ser51, Ser53, and 83–86 contribute to the NADP(+) site; these read YGSQ and DQHQ. His108 is an active-site residue. Residue Gly134 participates in NADP(+) binding. The 146-residue stretch at 183–328 folds into the KARI C-terminal knotted domain; the sequence is TFTEETETDL…RELRKLFAWN (146 aa). Positions 191, 195, 227, and 231 each coordinate Mg(2+). Residue Ser252 participates in substrate binding.

This sequence belongs to the ketol-acid reductoisomerase family. Requires Mg(2+) as cofactor.

It carries out the reaction (2R)-2,3-dihydroxy-3-methylbutanoate + NADP(+) = (2S)-2-acetolactate + NADPH + H(+). The catalysed reaction is (2R,3R)-2,3-dihydroxy-3-methylpentanoate + NADP(+) = (S)-2-ethyl-2-hydroxy-3-oxobutanoate + NADPH + H(+). Its pathway is amino-acid biosynthesis; L-isoleucine biosynthesis; L-isoleucine from 2-oxobutanoate: step 2/4. The protein operates within amino-acid biosynthesis; L-valine biosynthesis; L-valine from pyruvate: step 2/4. Functionally, involved in the biosynthesis of branched-chain amino acids (BCAA). Catalyzes an alkyl-migration followed by a ketol-acid reduction of (S)-2-acetolactate (S2AL) to yield (R)-2,3-dihydroxy-isovalerate. In the isomerase reaction, S2AL is rearranged via a Mg-dependent methyl migration to produce 3-hydroxy-3-methyl-2-ketobutyrate (HMKB). In the reductase reaction, this 2-ketoacid undergoes a metal-dependent reduction by NADPH to yield (R)-2,3-dihydroxy-isovalerate. The chain is Ketol-acid reductoisomerase (NADP(+)) from Clavibacter michiganensis subsp. michiganensis (strain NCPPB 382).